A 396-amino-acid chain; its full sequence is Acetate kinase (396 aa).

Residue Asn-8 participates in Mg(2+) binding. Lys-15 serves as a coordination point for ATP. Arg-89 lines the substrate pocket. Asp-146 acts as the Proton donor/acceptor in catalysis. ATP contacts are provided by residues 206–210 (HIGNG), 283–285 (DMR), and 331–335 (GVGEN). Glu-383 is a binding site for Mg(2+).

It belongs to the acetokinase family. In terms of assembly, homodimer. The cofactor is Mg(2+). Mn(2+) serves as cofactor.

It is found in the cytoplasm. It catalyses the reaction acetate + ATP = acetyl phosphate + ADP. Its pathway is metabolic intermediate biosynthesis; acetyl-CoA biosynthesis; acetyl-CoA from acetate: step 1/2. In terms of biological role, catalyzes the formation of acetyl phosphate from acetate and ATP. Can also catalyze the reverse reaction. The sequence is that of Acetate kinase from Streptococcus pneumoniae (strain ATCC 700669 / Spain 23F-1).